The sequence spans 42 residues: MQDFTKYLSTAPVLSALWFAILAGLLIEINRFFPDALLFPFG.

Residues 7-27 traverse the membrane as a helical segment; sequence YLSTAPVLSALWFAILAGLLI.

Belongs to the PsaJ family.

The protein localises to the plastid. It localises to the chloroplast thylakoid membrane. May help in the organization of the PsaE and PsaF subunits. This is Photosystem I reaction center subunit IX from Chlorokybus atmophyticus (Soil alga).